The primary structure comprises 528 residues: GMP synthase [glutamine-hydrolyzing] (528 aa).

The 192-residue stretch at 13 to 204 (SILILDFGSQ…VYSIAKCKAD (192 aa)) folds into the Glutamine amidotransferase type-1 domain. Cys-90 (nucleophile) is an active-site residue. Residues His-178 and Glu-180 contribute to the active site. The 199-residue stretch at 205-403 (WTTETFLEET…LGLPDEIIKR (199 aa)) folds into the GMPS ATP-PPase domain. 232–238 (SGGVDSS) serves as a coordination point for ATP.

As to quaternary structure, homodimer.

It catalyses the reaction XMP + L-glutamine + ATP + H2O = GMP + L-glutamate + AMP + diphosphate + 2 H(+). Its pathway is purine metabolism; GMP biosynthesis; GMP from XMP (L-Gln route): step 1/1. Catalyzes the synthesis of GMP from XMP. This chain is GMP synthase [glutamine-hydrolyzing], found in Prochlorococcus marinus subsp. pastoris (strain CCMP1986 / NIES-2087 / MED4).